A 102-amino-acid chain; its full sequence is Small ribosomal subunit protein uS10m (102 aa).

Belongs to the universal ribosomal protein uS10 family.

The protein localises to the mitochondrion. The protein is Small ribosomal subunit protein uS10m (RPS10) of Marchantia polymorpha (Common liverwort).